A 386-amino-acid polypeptide reads, in one-letter code: S-adenosylmethionine synthase (386 aa).

Glutamate 8 provides a ligand contact to Mg(2+). Residue histidine 14 participates in ATP binding. Residue glutamate 42 coordinates K(+). 2 residues coordinate L-methionine: glutamate 55 and glutamine 98. ATP is bound by residues 166–168 (DGK), 234–237 (SGRF), aspartate 245, 251–252 (RK), alanine 268, lysine 272, and lysine 276. Aspartate 245 contacts L-methionine. Residue lysine 276 coordinates L-methionine.

This sequence belongs to the AdoMet synthase family. Homotetramer. Mn(2+) serves as cofactor. Mg(2+) is required as a cofactor. Requires Co(2+) as cofactor. It depends on K(+) as a cofactor.

The protein resides in the cytoplasm. It carries out the reaction L-methionine + ATP + H2O = S-adenosyl-L-methionine + phosphate + diphosphate. The protein operates within amino-acid biosynthesis; S-adenosyl-L-methionine biosynthesis; S-adenosyl-L-methionine from L-methionine: step 1/1. In terms of biological role, catalyzes the formation of S-adenosylmethionine from methionine and ATP. The reaction comprises two steps that are both catalyzed by the same enzyme: formation of S-adenosylmethionine (AdoMet) and triphosphate, and subsequent hydrolysis of the triphosphate. This chain is S-adenosylmethionine synthase (METK), found in Ostreococcus tauri.